Here is a 137-residue protein sequence, read N- to C-terminus: Small ribosomal subunit protein uS12 (137 aa).

The residue at position 102 (D102) is a 3-methylthioaspartic acid.

Belongs to the universal ribosomal protein uS12 family. As to quaternary structure, part of the 30S ribosomal subunit. Contacts proteins S8 and S17. May interact with IF1 in the 30S initiation complex.

With S4 and S5 plays an important role in translational accuracy. Its function is as follows. Interacts with and stabilizes bases of the 16S rRNA that are involved in tRNA selection in the A site and with the mRNA backbone. Located at the interface of the 30S and 50S subunits, it traverses the body of the 30S subunit contacting proteins on the other side and probably holding the rRNA structure together. The combined cluster of proteins S8, S12 and S17 appears to hold together the shoulder and platform of the 30S subunit. The sequence is that of Small ribosomal subunit protein uS12 from Mesoplasma florum (strain ATCC 33453 / NBRC 100688 / NCTC 11704 / L1) (Acholeplasma florum).